The chain runs to 488 residues: Protein nucleotidyltransferase YdiU (488 aa).

Residues Gly-91, Gly-93, Arg-94, Lys-114, Asp-126, Gly-127, Arg-177, and Arg-184 each contribute to the ATP site. Catalysis depends on Asp-253, which acts as the Proton acceptor. Mg(2+)-binding residues include Asn-254 and Asp-263. Asp-263 contacts ATP.

This sequence belongs to the SELO family. Mg(2+) is required as a cofactor. Mn(2+) serves as cofactor.

It catalyses the reaction L-seryl-[protein] + ATP = 3-O-(5'-adenylyl)-L-seryl-[protein] + diphosphate. It carries out the reaction L-threonyl-[protein] + ATP = 3-O-(5'-adenylyl)-L-threonyl-[protein] + diphosphate. The enzyme catalyses L-tyrosyl-[protein] + ATP = O-(5'-adenylyl)-L-tyrosyl-[protein] + diphosphate. The catalysed reaction is L-histidyl-[protein] + UTP = N(tele)-(5'-uridylyl)-L-histidyl-[protein] + diphosphate. It catalyses the reaction L-seryl-[protein] + UTP = O-(5'-uridylyl)-L-seryl-[protein] + diphosphate. It carries out the reaction L-tyrosyl-[protein] + UTP = O-(5'-uridylyl)-L-tyrosyl-[protein] + diphosphate. Its function is as follows. Nucleotidyltransferase involved in the post-translational modification of proteins. It can catalyze the addition of adenosine monophosphate (AMP) or uridine monophosphate (UMP) to a protein, resulting in modifications known as AMPylation and UMPylation. The chain is Protein nucleotidyltransferase YdiU from Bacillus cereus (strain AH187).